Reading from the N-terminus, the 455-residue chain is 5'-nucleotidase domain-containing protein 1 (455 aa).

D16 functions as the Nucleophile in the catalytic mechanism. The Mg(2+) site is built by D16 and D18. D18 acts as the Proton donor in catalysis. N6-acetyllysine is present on K171. D313 is a binding site for Mg(2+). Residues 339–364 (GDEGTRSQRPEESEPLEKKGKYEGPK) show a composition bias toward basic and acidic residues. The disordered stretch occupies residues 339–368 (GDEGTRSQRPEESEPLEKKGKYEGPKAKPL).

The protein belongs to the 5'(3')-deoxyribonucleotidase family.

The sequence is that of 5'-nucleotidase domain-containing protein 1 (NT5DC1) from Homo sapiens (Human).